A 587-amino-acid chain; its full sequence is Vesicular glutamate transporter 2.2 (587 aa).

Over 1–71 (MDTVKERVLA…CTCFGLPRRY (71 aa)) the chain is Cytoplasmic. A helical transmembrane segment spans residues 72-92 (IIAIMSGLGFCISFGIRCNLG). The Vesicular portion of the chain corresponds to 93-125 (VAIVDMVNNSTIHKGGKIIIKGKAKFNWDPETV). 2 N-linked (GlcNAc...) asparagine glycosylation sites follow: N100 and N101. A helical transmembrane segment spans residues 126–146 (GMIHGSFFWGYTVTQIPGGYI). Residues 147 to 149 (SSR) are Cytoplasmic-facing. The chain crosses the membrane as a helical span at residues 150–170 (LAANRVFGAAILLTSTLNMFI). The Vesicular portion of the chain corresponds to 171 to 180 (PSAARVHYGC). Residues 181–203 (VMFVRILQGLVEGVTYPACHGIW) form a helical membrane-spanning segment. The Cytoplasmic segment spans residues 204 to 217 (SKWAPPLERSRLAT). The helical transmembrane segment at 218–238 (TSFCGSYAGAVVAMPLAGILV) threads the bilayer. Over 239-245 (QYSGWSS) the chain is Vesicular. The chain crosses the membrane as a helical span at residues 246–266 (VFYIYGSFGIVWYMFWILVSY). Residues 267–311 (ESPADHPTITDEERTYIEESIGESAKLLGAMEKYKTPWRKFFTSM) are Cytoplasmic-facing. Residues 312 to 332 (PVYAIIVANFCRSWTFYLLLI) form a helical membrane-spanning segment. Residues 333–350 (SQPAYFEEVFGFEISKVG) lie on the Vesicular side of the membrane. A helical transmembrane segment spans residues 351-371 (MVSALPHLVMTIIVPIGGQLA). At 372 to 387 (DYLRSKNILTTTTVRK) the chain is on the cytoplasmic side. A helical membrane pass occupies residues 388-408 (IMNCGGFGMEATLLLVVGFSH). Residues 409 to 410 (SK) lie on the Vesicular side of the membrane. Residues 411-431 (GVAISFLVLAVGFSGFAISGF) form a helical membrane-spanning segment. The Cytoplasmic portion of the chain corresponds to 432–444 (NVNHLDIAPRYAS). The helical transmembrane segment at 445–465 (ILMGISNGVGTLSGMVCPLIV) threads the bilayer. The Vesicular portion of the chain corresponds to 466–479 (GAMTKNKTREEWQN). N-linked (GlcNAc...) asparagine glycosylation occurs at N471. Residues 480-500 (VFLIASLVHYGGVIFYGIFAS) form a helical membrane-spanning segment. Topologically, residues 501-587 (GEKQPWADPE…ERTYTGDGYS (87 aa)) are cytoplasmic.

This sequence belongs to the major facilitator superfamily. Sodium/anion cotransporter family. VGLUT subfamily. Expressed in spinal cord.

The protein resides in the cytoplasmic vesicle. It is found in the secretory vesicle. It localises to the synaptic vesicle membrane. The protein localises to the membrane. Its subcellular location is the synapse. The protein resides in the synaptosome. It is found in the cell membrane. The catalysed reaction is L-glutamate(out) = L-glutamate(in). It carries out the reaction 3 Na(+)(out) + phosphate(out) = 3 Na(+)(in) + phosphate(in). It catalyses the reaction phosphate(in) = phosphate(out). The enzyme catalyses K(+)(in) + H(+)(out) = K(+)(out) + H(+)(in). The catalysed reaction is chloride(in) = chloride(out). Its activity is regulated as follows. Chloride channel activity is allosterically activated by lumenal H(+) and Cl(-) leading to synaptic vesicles acidification. The L-glutamate transport activity is allosterically activated by lumenal H(+) and Cl(-). The allosteric requirement for H(+) efficiently prevents non-vesicular efflux across the plasma membrane. The L-glutamate uniporter activity exhibits a biphasic dependence on chloride concentration. Functionally, multifunctional transporter that transports L-glutamate as well as multiple ions such as chloride, proton, potassium, sodium and phosphate. At the synaptic vesicle membrane, mainly functions as a uniporter which transports preferentially L-glutamate but also, phosphate from the cytoplasm into synaptic vesicles at presynaptic nerve terminals of excitatory neural cells. The L-glutamate or phosphate uniporter activity is electrogenic and is driven by the proton electrochemical gradient, mainly by the electrical gradient established by the vacuolar H(+)-ATPase across the synaptic vesicle membrane. In addition, functions as a chloride channel that allows a chloride permeation through the synaptic vesicle membrane therefore affects the proton electrochemical gradient and promotes synaptic vesicles acidification. Moreover, functions as a vesicular K(+)/H(+) antiport allowing to maintain the electrical gradient and to decrease chemical gradient and therefore sustain vesicular L-glutamate uptake. The vesicular H(+)/H(+) antiport activity is electroneutral. At the plasma membrane, following exocytosis, functions as a symporter of Na(+) and phosphate from the extracellular space to the cytoplasm allowing synaptic phosphate homeostasis regulation. The symporter activity is driven by an inside negative membrane potential and is electrogenic. Also involved in the regulation of retinal hyaloid vessel regression during postnatal development. May also play a role in the endocrine L-glutamatergic system of other tissues such as pineal gland and pancreas. The sequence is that of Vesicular glutamate transporter 2.2 (slc17a6a) from Danio rerio (Zebrafish).